Consider the following 313-residue polypeptide: tRNA dimethylallyltransferase (313 aa).

17–24 is a binding site for ATP; the sequence is GPTASGKT. 19–24 provides a ligand contact to substrate; it reads TASGKT. 4 interaction with substrate tRNA regions span residues 42-45, 166-170, 247-252, and 280-287; these read DSAL, QRLSR, RCVGYR, and KRQITWLR.

It belongs to the IPP transferase family. As to quaternary structure, monomer. Mg(2+) serves as cofactor.

It catalyses the reaction adenosine(37) in tRNA + dimethylallyl diphosphate = N(6)-dimethylallyladenosine(37) in tRNA + diphosphate. Functionally, catalyzes the transfer of a dimethylallyl group onto the adenine at position 37 in tRNAs that read codons beginning with uridine, leading to the formation of N6-(dimethylallyl)adenosine (i(6)A). This chain is tRNA dimethylallyltransferase, found in Proteus mirabilis (strain HI4320).